A 189-amino-acid chain; its full sequence is Thymidine kinase (189 aa).

ATP-binding positions include 9–16 (GTMNSGKS) and 85–88 (DEAQ). Glu86 functions as the Proton acceptor in the catalytic mechanism. 4 residues coordinate Zn(2+): Cys143, Cys146, Cys180, and His183.

The protein belongs to the thymidine kinase family. In terms of assembly, homotetramer.

It localises to the cytoplasm. The catalysed reaction is thymidine + ATP = dTMP + ADP + H(+). This chain is Thymidine kinase, found in Lactococcus lactis subsp. lactis (strain IL1403) (Streptococcus lactis).